Here is a 183-residue protein sequence, read N- to C-terminus: Gene BABR protein 2 (183 aa).

In Babesia bovis, this protein is Gene BABR protein 2.